The chain runs to 381 residues: Transcription termination factor 4, mitochondrial (381 aa).

A mitochondrion-targeting transit peptide spans 1–42 (MAAFGRQVLDWHRLIPLTWACMARQTPHLGEQRRTTASLLRK). MTERF repeat units lie at residues 142–172 (CVVL…LGLG), 177–204 (KRVL…LKEK), 209–239 (VQQV…YAYF), 245–270 (HPDI…YLER), and 290–318 (LKDI…VFKK). The segment at 310–327 (VEEFQVFKKLLAREEEES) is dimerization with NSUN4. The tract at residues 322–381 (REEEESESSTSDDKRASLDEDEDDDDEEDNDEDDNDEDDDDEDDDEAEDNDEDEDDDEEE) is disordered. Over residues 340 to 381 (DEDEDDDDEEDNDEDDNDEDDDDEDDDEAEDNDEDEDDDEEE) the composition is skewed to acidic residues.

Belongs to the mTERF family. In terms of assembly, heterodimer with NSUN4; this interaction may be required for NSUN4 recruitment to the mitochondrial large ribosomal subunit. In terms of processing, the mature mitochondrial protein exists in 2 forms differing at the level of their N-terminus, one is starting at residue 43 and the other at residue 48.

It localises to the mitochondrion. Regulator of mitochondrial ribosome biogenesis and translation. Binds to mitochondrial ribosomal RNAs 16S, 12S and 7S and targets NSUN4 RNA methyltransferase to the mitochondrial large ribosomal subunit (39S). The polypeptide is Transcription termination factor 4, mitochondrial (MTERF4) (Homo sapiens (Human)).